Here is an 88-residue protein sequence, read N- to C-terminus: MRLFIALPVLIVVVAMALEGPAPAQAAPDLSSTLERLPDKLKEFGSTLEDKAREAIDHIKQKEILTKTRTWFSETFSKVKEKLKTTFA.

Positions 1 to 26 (MRLFIALPVLIVVVAMALEGPAPAQA) are cleaved as a signal peptide.

This sequence belongs to the apolipoprotein C1 family.

It localises to the secreted. Functionally, inhibitor of lipoprotein binding to the low density lipoprotein (LDL) receptor, LDL receptor-related protein, and very low density lipoprotein (VLDL) receptor. Associates with high density lipoproteins (HDL) and the triacylglycerol-rich lipoproteins in the plasma and makes up about 10% of the protein of the VLDL and 2% of that of HDL. Appears to interfere directly with fatty acid uptake and is also the major plasma inhibitor of cholesteryl ester transfer protein (CETP). Modulates the interaction of APOE with beta-migrating VLDL and inhibits binding of beta-VLDL to the LDL receptor-related protein. Binds free fatty acids and reduces their intracellular esterification. The polypeptide is Apolipoprotein C-I (Apoc1) (Grammomys surdaster (African woodland thicket rat)).